A 481-amino-acid polypeptide reads, in one-letter code: Serine/threonine-protein kinase US3 (481 aa).

Positions 12–63 (RPDKRQEASVPPETNTAPAFPASTFYTPAEDAYLAPGPPETIHPSRPPSPGE) are disordered. Over residues 47 to 61 (PGPPETIHPSRPPSP) the composition is skewed to pro residues. The Protein kinase domain occupies 191-478 (FAIHGALIPG…AAELLRLPLF (288 aa)). ATP-binding positions include 197 to 205 (LIPGSEGCV) and Lys220. The active-site Proton acceptor is the Asp305.

Belongs to the protein kinase superfamily. Ser/Thr protein kinase family. In terms of assembly, interacts with host LAT; this interaction prevents LAT activation of TRAF6. In terms of processing, phosphorylated by UL13; this phosphorylation regulates subsequent phosphorylation of UL31 and UL34 by US3. Autophosphorylated.

The protein localises to the host cytoplasm. It localises to the host nucleus. The enzyme catalyses L-seryl-[protein] + ATP = O-phospho-L-seryl-[protein] + ADP + H(+). It carries out the reaction L-threonyl-[protein] + ATP = O-phospho-L-threonyl-[protein] + ADP + H(+). Multifunctional serine/threonine kinase that plays a role in several processes including egress of virus particles from the nucleus, modulation of the actin cytoskeleton and inhibition of host immune response. Phosphorylates UL31 and UL34, two critical regulators of capsid budding from nucleus to endoplasmic reticulum, thereby facilitating virion egress. Modulates and redistributes host components of the nuclear envelope, including LMNA, emerin/EMD and the nuclear matrix protein MATR3. In turn, facilitates nuclear pore impairment and capsid release through impaired nuclear envelope. Phosphorylates envelope glycoprotein B (gB), probably to direct it to the cell surface. Promotes virus intracellular spread by restructuring host cell cytoskeleton. Blocks host apoptosis to extend cell survival and allow efficient viral replication. Promotes viral gene expression by phosphorylating host HDAC2 to reduce viral genome silencing. Strongly inhibits TCR-activated signal transduction in T-cells by reducing the ubiquitination of LAT and TRAF6, leading to a suboptimal activation of LAT. Subverts host antiviral innate immunity by inhibiting type I interferon production through hyperphosphorylation of beta-catenin/CTNNB1. In addition, phosphorylates the RNA sensor RIGI and the transcription factor IRF3 to prevent the RLR-mediated antiviral signaling pathway. Hyperphosphorylates host RELA and thereby dampens NF-kappa-B signaling. Acts as an immunoevasin partly responsible for inhibition of MR1 expression and antigen presentation in response to bacterial infection. The protein is Serine/threonine-protein kinase US3 (US3) of Human herpesvirus 2 (strain HG52) (HHV-2).